We begin with the raw amino-acid sequence, 242 residues long: Ras-like protein family member 11A (242 aa).

The segment at 17 to 241 (ESSSDYLLPK…SSKAKASSAL (225 aa)) is small GTPase-like. Residues 34 to 41 (GAGCVGKS), 81 to 88 (DTPGGIQA), and 147 to 150 (NKGD) contribute to the GTP site.

Belongs to the small GTPase superfamily. Ras family. In terms of assembly, interacts with UBF/UBTF.

It localises to the nucleus. It is found in the nucleolus. It catalyses the reaction GTP + H2O = GDP + phosphate + H(+). In terms of biological role, regulator of rDNA transcription. Acts in cooperation UBF/UBTF and positively regulates RNA polymerase I transcription. This Mus musculus (Mouse) protein is Ras-like protein family member 11A.